The chain runs to 345 residues: Myb/SANT-like DNA-binding domain-containing protein 4 (345 aa).

Residues Leu4–Arg77 enclose the Myb-like domain. A Glycyl lysine isopeptide (Lys-Gly) (interchain with G-Cter in SUMO2) cross-link involves residue Lys9. Ser106 is modified (phosphoserine). Residues Lys114 and Lys142 each participate in a glycyl lysine isopeptide (Lys-Gly) (interchain with G-Cter in SUMO2) cross-link. A disordered region spans residues Thr139–Asn175. Residue Thr188 is modified to Phosphothreonine. Residues His202 to Leu344 are a coiled coil. Residues Lys237, Lys254, and Lys273 each participate in a glycyl lysine isopeptide (Lys-Gly) (interchain with G-Cter in SUMO2) cross-link.

The sequence is that of Myb/SANT-like DNA-binding domain-containing protein 4 (Msantd4) from Mus musculus (Mouse).